An 80-amino-acid polypeptide reads, in one-letter code: Exodeoxyribonuclease 7 small subunit (80 aa).

Belongs to the XseB family. Heterooligomer composed of large and small subunits.

The protein localises to the cytoplasm. The enzyme catalyses Exonucleolytic cleavage in either 5'- to 3'- or 3'- to 5'-direction to yield nucleoside 5'-phosphates.. Its function is as follows. Bidirectionally degrades single-stranded DNA into large acid-insoluble oligonucleotides, which are then degraded further into small acid-soluble oligonucleotides. This Escherichia coli (strain SE11) protein is Exodeoxyribonuclease 7 small subunit.